Reading from the N-terminus, the 550-residue chain is Chaperonin GroEL 2 (550 aa).

Residues 30 to 33 (TLGP), lysine 51, 87 to 91 (DGTTT), glycine 415, and aspartate 496 contribute to the ATP site.

It belongs to the chaperonin (HSP60) family. Forms a cylinder of 14 subunits composed of two heptameric rings stacked back-to-back. Interacts with the co-chaperonin GroES.

Its subcellular location is the cytoplasm. It carries out the reaction ATP + H2O + a folded polypeptide = ADP + phosphate + an unfolded polypeptide.. Together with its co-chaperonin GroES, plays an essential role in assisting protein folding. The GroEL-GroES system forms a nano-cage that allows encapsulation of the non-native substrate proteins and provides a physical environment optimized to promote and accelerate protein folding. In Bradyrhizobium diazoefficiens (strain JCM 10833 / BCRC 13528 / IAM 13628 / NBRC 14792 / USDA 110), this protein is Chaperonin GroEL 2.